The following is a 77-amino-acid chain: EMBRYO SURROUNDING FACTOR 1-like protein 6 (77 aa).

A signal peptide spans 1 to 25 (MSPSHFAILFIIVISLVPLHGYANG). Cystine bridges form between Cys38-Cys53, Cys43-Cys72, Cys51-Cys68, and Cys54-Cys61.

This sequence belongs to the MEG family.

The sequence is that of EMBRYO SURROUNDING FACTOR 1-like protein 6 (ESFL6) from Arabidopsis thaliana (Mouse-ear cress).